The sequence spans 600 residues: Glutamine--fructose-6-phosphate aminotransferase [isomerizing] (600 aa).

Cys-2 serves as the catalytic Nucleophile; for GATase activity. In terms of domain architecture, Glutamine amidotransferase type-2 spans 2 to 217; that stretch reads CGIVGYIGQL…DKEMVIVTDD (216 aa). SIS domains follow at residues 283-422 and 452-590; these read IAAA…KNGI and IARE…VDKP. Lys-595 (for Fru-6P isomerization activity) is an active-site residue.

In terms of assembly, homodimer.

The protein localises to the cytoplasm. The catalysed reaction is D-fructose 6-phosphate + L-glutamine = D-glucosamine 6-phosphate + L-glutamate. Functionally, catalyzes the first step in hexosamine metabolism, converting fructose-6P into glucosamine-6P using glutamine as a nitrogen source. The chain is Glutamine--fructose-6-phosphate aminotransferase [isomerizing] (glmS) from Bacillus spizizenii (strain ATCC 23059 / NRRL B-14472 / W23) (Bacillus subtilis subsp. spizizenii).